The sequence spans 1085 residues: MPHFTVVPVDGPRRGDYDNLEGLSWVDYGERAELDDSDGHGNHRESSPFLSPLEASRGIDYYDRNLALFEEELDIRPKVSSLLGKLVSYTNLTQGAKEHEEAESGEGTRRRAAEAPSMGTLMGVYLPCLQNIFGVILFLRLTWMVGTAGVLQALLIVLICCCCTLLTAISMSAIATNGVVPAGGSYFMISRSLGPEFGGAVGLCFYLGTTFAAAMYILGAIEILLTYIAPPAAIFYPSGAHDTSNATLNNMRVYGTIFLTFMTLVVFVGVKYVNKFASLFLACVIISILSIYAGGIKSIFDPPVFPVCMLGNRTLSRDQFDICAKTAVVDNETVATQLWSFFCHSPNLTTDSCDPYFMLNNVTEIPGIPGAAAGVLQENLWSAYLEKGDIVEKHGLPSADAPSLKESLPLYVVADIATSFTVLVGIFFPSVTGIMAGSNRSGDLRDAQKSIPVGTILAIITTSLVYFSSVVLFGACIEGVVLRDKYGDGVSRNLVVGTLAWPSPWVIVIGSFFSTCGAGLQSLTGAPRLLQAIAKDNIIPFLRVFGHGKVNGEPTWALLLTALIAELGILIASLDMVAPILSMFFLMCYLFVNLACAVQTLLRTPNWRPRFKYYHWALSFLGMSLCLALMFVSSWYYALVAMLIAGMIYKYIEYQGAEKEWGDGIRGLSLSAARYALLRLEEGPPHTKNWRPQLLVLLKLDEDLHVKYPRLLTFASQLKAGKGLTIVGSVIQGSFLESYGEAQAAEQTIKNMMEIEKVKGFCQVVVASKVREGLAHLIQSCGLGGMRHNSVVLGWPYGWRQSEDPRAWKTFIDTVRCTTAAHLALLVPKNIAFYPSNHERYLEGHIDVWWIVHDGGMLMLLPFLLRQHKVWRKCRMRIFTVAQMDDNSIQMKKDLAVFLYHLRLEAEVEVVEMHNSDISAYTYERTLMMEQRSQMLRQMRLTKTEREREAQLVKDRHSALRLESLYSDEEDESAVGADKIQMTWTRDKYMTETWDPSHAPDNFRELVHIKPDQSNVRRMHTAVKLNEVIVTRSHDARLVLLNMPGPPRNSEGDENYMEFLEVLTEGLERVLLVRGGGREVITIYS.

Residues 1–119 (MPHFTVVPVD…RRAAEAPSMG (119 aa)) lie on the Cytoplasmic side of the membrane. 5 positions are modified to phosphoserine: serine 24, serine 47, serine 51, serine 81, and serine 88. The chain crosses the membrane as a discontinuously helical span at residues 120 to 141 (TLMGVYLPCLQNIFGVILFLRL). Asparagine 131 and isoleucine 132 together coordinate K(+). Residues 142–149 (TWMVGTAG) are Extracellular-facing. A helical membrane pass occupies residues 150-172 (VLQALLIVLICCCCTLLTAISMS). Residues 173 to 196 (AIATNGVVPAGGSYFMISRSLGPE) are Cytoplasmic-facing. The helical transmembrane segment at 197–225 (FGGAVGLCFYLGTTFAAAMYILGAIEILL) threads the bilayer. Tyrosine 216 provides a ligand contact to K(+). The Extracellular portion of the chain corresponds to 226–248 (TYIAPPAAIFYPSGAHDTSNATL). Asparagine 245 carries N-linked (GlcNAc...) asparagine glycosylation. A run of 2 helical transmembrane segments spans residues 249–271 (NNMRVYGTIFLTFMTLVVFVGVK) and 272–297 (YVNKFASLFLACVIISILSIYAGGIK). Residues 298-419 (SIFDPPVFPV…LYVVADIATS (122 aa)) are Extracellular-facing. A disulfide bridge links cysteine 308 with cysteine 323. N-linked (GlcNAc...) asparagine glycosylation is found at asparagine 312, asparagine 331, asparagine 347, and asparagine 361. An intrachain disulfide couples cysteine 343 to cysteine 353. A helical transmembrane segment spans residues 420–440 (FTVLVGIFFPSVTGIMAGSNR). Residues proline 429 and threonine 432 each coordinate K(+). 3 residues coordinate chloride: glycine 433, isoleucine 434, and methionine 435. Residues 441–450 (SGDLRDAQKS) lie on the Cytoplasmic side of the membrane. The chain crosses the membrane as a helical span at residues 451-473 (IPVGTILAIITTSLVYFSSVVLF). The Extracellular segment spans residues 474 to 504 (GACIEGVVLRDKYGDGVSRNLVVGTLAWPSP). Residues 505-531 (WVIVIGSFFSTCGAGLQSLTGAPRLLQ) traverse the membrane as a helical segment. The Cytoplasmic segment spans residues 532–554 (AIAKDNIIPFLRVFGHGKVNGEP). The next 2 membrane-spanning stretches (helical) occupy residues 555 to 575 (TWALLLTALIAELGILIASLD) and 576 to 598 (MVAPILSMFFLMCYLFVNLACAV). Tyrosine 589 lines the chloride pocket. The Cytoplasmic portion of the chain corresponds to 599–612 (QTLLRTPNWRPRFK). The next 2 helical transmembrane spans lie at 613-635 (YYHWALSFLGMSLCLALMFVSSW) and 636-651 (YYALVAMLIAGMIYKY). The Cytoplasmic segment spans residues 652–1085 (IEYQGAEKEW…GGREVITIYS (434 aa)). Residues 665–681 (IRGLSLSAARYALLRLE) form a scissor helix region. Residues leucine 697, lysine 699, lysine 707, tyrosine 708, and valine 730 each coordinate ATP. Residue serine 734 is modified to Phosphoserine. 3 residues coordinate ATP: glycine 794, tryptophan 795, and tyrosine 797. Phosphoserine occurs at positions 916 and 967. A Phosphothreonine modification is found at threonine 983. Position 1050 is a phosphoserine (serine 1050).

Belongs to the SLC12A transporter family. K/Cl co-transporter subfamily. As to quaternary structure, homodimer; adopts a domain-swap conformation at the scissor helices connecting the transmembrane domain and C-terminal domain. Heterodimer with other K-Cl cotransporters. Post-translationally, phosphorylated, phosphorylation may regulate transporter activity. As to expression, ubiquitous. Levels are much higher in erythrocytes from patients with Hb SC and Hb SS compared to normal AA erythrocytes. This may contribute to red blood cell dehydration and to the manifestation of sickle cell disease by increasing the intracellular concentration of HbS. Not detected in circulating reticulocytes.

Its subcellular location is the cell membrane. It carries out the reaction K(+)(in) + chloride(in) = K(+)(out) + chloride(out). With respect to regulation, inhibited by WNK3. Functionally, mediates electroneutral potassium-chloride cotransport when activated by cell swelling. May contribute to cell volume homeostasis in single cells. May be involved in the regulation of basolateral Cl(-) exit in NaCl absorbing epithelia. Its function is as follows. No transporter activity. This is Solute carrier family 12 member 4 from Homo sapiens (Human).